Consider the following 689-residue polypeptide: Glycine--tRNA ligase beta subunit (689 aa).

The protein belongs to the class-II aminoacyl-tRNA synthetase family. As to quaternary structure, tetramer of two alpha and two beta subunits.

The protein resides in the cytoplasm. It catalyses the reaction tRNA(Gly) + glycine + ATP = glycyl-tRNA(Gly) + AMP + diphosphate. The chain is Glycine--tRNA ligase beta subunit from Oenococcus oeni (strain ATCC BAA-331 / PSU-1).